We begin with the raw amino-acid sequence, 320 residues long: Malate dehydrogenase (320 aa).

NAD(+) is bound by residues 10-15 (GSGMIG) and Asp-34. Residues Arg-83 and Arg-89 each contribute to the substrate site. NAD(+)-binding positions include Asn-96 and 119–121 (ITN). Substrate is bound by residues Asn-121 and Arg-152. His-176 (proton acceptor) is an active-site residue.

It belongs to the LDH/MDH superfamily. MDH type 3 family.

The catalysed reaction is (S)-malate + NAD(+) = oxaloacetate + NADH + H(+). Its function is as follows. Catalyzes the reversible oxidation of malate to oxaloacetate. In Brucella suis (strain ATCC 23445 / NCTC 10510), this protein is Malate dehydrogenase.